A 4080-amino-acid polypeptide reads, in one-letter code: Hybrid PKS-NRPS synthetase poxE (4080 aa).

In terms of domain architecture, Ketosynthase family 3 (KS3) spans 8 to 442 (REPIAIVGSG…GTNAHAIIEA (435 aa)). Residues cysteine 181, histidine 320, and histidine 362 each act as for beta-ketoacyl synthase activity in the active site. The interval 554-878 (VFTGQGAQWA…QRGMNDVEAM (325 aa)) is malonyl-CoA:ACP transacylase (MAT) domain. Residues 944–1078 (HPILGTRCPD…GRLVITYGPV (135 aa)) are N-terminal hotdog fold. Residues 944-1246 (HPILGTRCPD…AVPLEATNAD (303 aa)) form the PKS/mFAS DH domain. Residues 945 to 1243 (PILGTRCPDG…GIHAVPLEAT (299 aa)) form a dehydratase (DH) domain region. Histidine 976 (proton acceptor; for dehydratase activity) is an active-site residue. Residues 1093-1246 (MVDVPSERFY…AVPLEATNAD (154 aa)) are C-terminal hotdog fold. The Proton donor; for dehydratase activity role is filled by aspartate 1152. The segment at 1400–1585 (HFSDYLASVV…GVDTFTSDAD (186 aa)) is methyltransferase (MT) domain. The ketoreductase (KR)domain stretch occupies residues 2118-2292 (TYWLVGLTGS…AGSVMNIGAI (175 aa)). The peptidyl carrier protein stretch occupies residues 2399 to 2478 (TTDEIYEVIK…TIGEIIKFVL (80 aa)). Residues 2405-2481 (EVIKECFIVK…EIIKFVLEKL (77 aa)) enclose the Carrier 1 domain. Serine 2441 is subject to O-(pantetheine 4'-phosphoryl)serine. The tract at residues 2488 to 2569 (SLGLSPPTGA…AASPSIHTEE (82 aa)) is disordered. A compositionally biased stretch (basic and acidic residues) spans 2511-2525 (VVVERRNVPRLEKKI). Positions 2528 to 2545 (SAGSRTSSSVTGTSKSVS) are enriched in low complexity. Polar residues predominate over residues 2551 to 2565 (DTASSQTSEAASPSI). The segment at 2607 to 3036 (KEPLSFGQSR…DSKQPGGHVS (430 aa)) is condensation. An adenylation region spans residues 3069–3478 (DMAKQYPQKL…DGRLRIEGRI (410 aa)). Positions 3593–3673 (AHLNEAQAQM…KMALLIKPQE (81 aa)) constitute a Carrier 2 domain. The tract at residues 3598–3670 (AQAQMVQLWE…TLEKMALLIK (73 aa)) is thiolation. Serine 3633 carries the O-(pantetheine 4'-phosphoryl)serine modification. A reductase (RED) domain region spans residues 3740 to 3959 (LTGATGFIGQ…DFVPVEQVVR (220 aa)).

This sequence in the C-terminal section; belongs to the NRP synthetase family.

It participates in secondary metabolite biosynthesis. In terms of biological role, hybrid PKS-NRPS synthetase; part of the gene cluster that mediates the biosynthesis of oxaleimides, cytotoxic compounds containing an unusual disubstituted succinimide moiety. The first step of the pathway is provided by the HR-PKS poxF that serves in a new mode of collaborative biosynthesis with the PKS-NRPS poxE, by providing the olefin containing amino acid substrate via the synthesis of an ACP-bound dec-4-enoate. The cytochrome P450 monooxygenase poxM-catalyzed oxidation at the alpha-position creates the enzyme-bound 2-hydroxydec-4-enoyl-ACP thioester, which may be prone to spontaneous hydrolysis to yield 2-hydroxydec-4-enoic acid due to increased electrophilicity of the carbonyl. 2-hydroxydec-4-enoic acid can then be further oxidized by poxM to yield the alpha-ketoacid 2-oxodec-4-enoicacid, which is reductively aminated by the aminotransferase poxL to yield (S,E)-2-aminodec-4-enoic acid. The Hybrid PKS-NRPS synthetase poxE then performs condensation between the octaketide product of its PKS modules and the amino group of (S,E)-2-aminodec-4-enoic acid which is activated and incorporated by the adenylation domain. The resulting aminoacyl product can be cyclized by the Diels-Alderase PoxQ and reductively released by the reductive (R) domain of poxE to yield an aldehyde intermediate. The released aldehyde is then substrate for a Knoevenagel condensation by the hydrolyase poxO followed by an oxidation at the 5-position of the pyrrolidone ring. The presence of the olefin from the amino acid building block allows for migration of the substituted allyl group to occur. This allylic transposition reaction takes place in a conjugate addition, semipinacol-like fashion to yield a succinimide intermediate. Iterative two-electron oxidations of the C7 methyl of the succinimide intermediate to the carboxylic acid can be catalyzed by one of two remaining cytochrome P450 monooxygenasess poxC or poxD to yield oxaleimide A. Subsequent oxidation yields the maleimide scaffold oxaleimide I. Both oxaleimide A and oxaleimide I can undergo oxidative modifications in the decalin ring to yield the series of products oxaleimides B to H. The protein is Hybrid PKS-NRPS synthetase poxE of Penicillium oxalicum (strain 114-2 / CGMCC 5302) (Penicillium decumbens).